The primary structure comprises 407 residues: Peptidase T (407 aa).

H78 contributes to the Zn(2+) binding site. Residue D80 is part of the active site. Residue D139 participates in Zn(2+) binding. E173 serves as the catalytic Proton acceptor. Zn(2+) contacts are provided by E174, D196, and H378.

The protein belongs to the peptidase M20B family. Requires Zn(2+) as cofactor.

It is found in the cytoplasm. The enzyme catalyses Release of the N-terminal residue from a tripeptide.. In terms of biological role, cleaves the N-terminal amino acid of tripeptides. The protein is Peptidase T of Shewanella halifaxensis (strain HAW-EB4).